The sequence spans 1215 residues: Zinc finger E-box-binding homeobox 2 (1215 aa).

Residues 1–111 (MKQPIMADGP…ILQASVAGPE (111 aa)) form a disordered region. Basic residues predominate over residues 12–24 (CKRRKQANPRRKN). The segment covering 57–74 (DQDTSPASMPNHESSPHM) has biased composition (polar residues). Residues 89 to 98 (RESVVEHSWH) are compositionally biased toward basic and acidic residues. Position 142 is a phosphoserine (S142). 3 C2H2-type zinc fingers span residues 211 to 234 (LTCP…KYRH), 241 to 263 (FSCP…MVTH), and 282 to 304 (FKCT…LRIH). The C2H2-type 4; atypical zinc-finger motif lies at 310–334 (YECPNCKKRFSHSGSYSSHISSKKC). Phosphoserine is present on residues S356, S360, and S364. The residue at position 377 (K377) is an N6-acetyllysine. K391 participates in a covalent cross-link: Glycyl lysine isopeptide (Lys-Gly) (interchain with G-Cter in SUMO); alternate. Residue K391 forms a Glycyl lysine isopeptide (Lys-Gly) (interchain with G-Cter in SUMO2); alternate linkage. Residues 437 to 487 (QHLGVGMEAPLLGFPTMNSNLSEVQKVLQIVDNTVSRQKMDCKTEDISKLK) are SMAD-MH2 binding domain. Residues K479 and K555 each participate in a glycyl lysine isopeptide (Lys-Gly) (interchain with G-Cter in SUMO2) cross-link. Residues 581–605 (FSCQFCKESFPGPIPLHQHERYLCK) form a C2H2-type 5; degenerate zinc finger. Glycyl lysine isopeptide (Lys-Gly) (interchain with G-Cter in SUMO2) cross-links involve residues K611 and K632. The homeobox; atypical DNA-binding region spans 644–703 (GLTSPINPYKDHMSVLKAYYAMNMEPNSDELLKISIAVGLPQEFVKEWFEQRKVYQYSNS). Phosphoserine is present on S647. 2 disordered regions span residues 702-740 (NSRS…DSIT) and 772-811 (VDKL…SEEL). A Glycyl lysine isopeptide (Lys-Gly) (interchain with G-Cter in SUMO2) cross-link involves residue K713. Phosphoserine is present on residues S731 and S780. The segment covering 780–808 (SNTPSPLNLSSTSSKNSHSSSYTPNSFSS) has biased composition (low complexity). The residue at position 782 (T782) is a Phosphothreonine. S784 is modified (phosphoserine). A Glycyl lysine isopeptide (Lys-Gly) (interchain with G-Cter in SUMO); alternate cross-link involves residue K866. Residue K866 forms a Glycyl lysine isopeptide (Lys-Gly) (interchain with G-Cter in SUMO2); alternate linkage. 2 C2H2-type zinc fingers span residues 999–1021 (YACD…KYEH) and 1027–1049 (HQCQ…SRLH). Residues 1055–1076 (YQCDKCGKRFSHSGSYSQHMNH) form a C2H2-type 8; atypical zinc finger. The tract at residues 1117-1215 (TPQGYSDSEE…EEDNMEDGME (99 aa)) is disordered. Residues S1122 and S1124 each carry the phosphoserine modification. Residues 1127–1149 (RESMPRDGESEKEHEKEGEEGYG) show a composition bias toward basic and acidic residues. A compositionally biased stretch (acidic residues) spans 1157-1167 (DEEEEEEEEES). Basic and acidic residues-rich tracts occupy residues 1168–1179 (ENKSMDTDPETI) and 1186–1205 (GDHS…KSDH). S1203 carries the phosphoserine modification. Positions 1206-1215 (EEDNMEDGME) are enriched in acidic residues.

Belongs to the delta-EF1/ZFH-1 C2H2-type zinc-finger family. In terms of assembly, interacts with CBX4 and CTBP1. Binds activated SMAD1, activated SMAD2 and activated SMAD3; binding with SMAD4 is not detected. In terms of processing, sumoylation on Lys-391 and Lys-866 is promoted by the E3 SUMO-protein ligase CBX4, and impairs interaction with CTBP1 and transcription repression activity.

It localises to the nucleus. It is found in the chromosome. Functionally, transcriptional inhibitor that binds to DNA sequence 5'-CACCT-3' in different promoters. Represses transcription of E-cadherin. Represses expression of MEOX2. The polypeptide is Zinc finger E-box-binding homeobox 2 (Zeb2) (Mus musculus (Mouse)).